The primary structure comprises 397 residues: GTPase Obg (397 aa).

Residues Met-1 to Leu-159 enclose the Obg domain. The disordered stretch occupies residues Ser-22–Ser-44. Gly residues predominate over residues Gly-33–Gly-43. Residues Ala-160–Glu-333 enclose the OBG-type G domain. GTP contacts are provided by residues Gly-166 to Ser-173, Phe-191 to Val-195, Asp-213 to Gly-216, Asn-283 to Asp-286, and Ser-314 to Val-316. Residues Ser-173 and Thr-193 each coordinate Mg(2+). Residues Thr-359–Asp-389 are disordered. Positions Glu-361 to Asp-389 are enriched in acidic residues.

Belongs to the TRAFAC class OBG-HflX-like GTPase superfamily. OBG GTPase family. As to quaternary structure, monomer. The cofactor is Mg(2+).

The protein resides in the cytoplasm. An essential GTPase which binds GTP, GDP and possibly (p)ppGpp with moderate affinity, with high nucleotide exchange rates and a fairly low GTP hydrolysis rate. Plays a role in control of the cell cycle, stress response, ribosome biogenesis and in those bacteria that undergo differentiation, in morphogenesis control. The polypeptide is GTPase Obg (Pseudoalteromonas atlantica (strain T6c / ATCC BAA-1087)).